Here is a 1448-residue protein sequence, read N- to C-terminus: Probable serine/threonine-protein kinase irlB (1448 aa).

Residues 412 to 423 (DDDDYDDYDDDD) are compositionally biased toward acidic residues. Positions 412–446 (DDDDYDDYDDDDDHHSGCNNNNNNNNDGDHNEDEN) are disordered. Positions 428–437 (GCNNNNNNNN) are enriched in low complexity. Coiled-coil stretches lie at residues 666–817 (AESE…EIQN), 887–921 (EIQL…SNMK), and 974–1016 (ENNK…QDED). Residues 975 to 1008 (NNKKQNLINDNNNNNNNNNNNNNNNNNNNNNNKL) are disordered. A compositionally biased stretch (low complexity) spans 978 to 1008 (KQNLINDNNNNNNNNNNNNNNNNNNNNNNKL). Residues 1027–1293 (RNESNILGRG…IQNVLNHPLF (267 aa)) form the Protein kinase domain. ATP is bound by residues 1033-1041 (LGRGSNGTL) and Lys-1056. Asp-1151 serves as the catalytic Proton acceptor. Residues 1296 to 1448 (LEKKIQFIDA…TIDYLFNFYN (153 aa)) form the KEN domain.

Belongs to the protein kinase superfamily. Ser/Thr protein kinase family.

The enzyme catalyses L-seryl-[protein] + ATP = O-phospho-L-seryl-[protein] + ADP + H(+). It carries out the reaction L-threonyl-[protein] + ATP = O-phospho-L-threonyl-[protein] + ADP + H(+). The protein is Probable serine/threonine-protein kinase irlB (irlB-1) of Dictyostelium discoideum (Social amoeba).